The primary structure comprises 67 residues: Conotoxin AbVIN (67 aa).

The N-terminal stretch at 1–17 is a signal peptide; sequence VIIIAVLFLTACQLIAT. Residues 18–40 constitute a propeptide that is removed on maturation; that stretch reads ASYARSERKHPDLRLSSRNSKLS. 3 cysteine pairs are disulfide-bonded: C43–C57, C50–C61, and C56–C66.

The protein belongs to the conotoxin O1 superfamily. As to expression, expressed by the venom duct.

It is found in the secreted. In Conus abbreviatus (Abbreviated cone), this protein is Conotoxin AbVIN.